Reading from the N-terminus, the 83-residue chain is MSETKIRTLQGVVVSNKMDKSIVVLIERRVKHPMYGKYMTRSTKLKAHDETNVCNEGDLVTITEVAPISKSKNWKLVDVITKA.

This sequence belongs to the universal ribosomal protein uS17 family. As to quaternary structure, part of the 30S ribosomal subunit.

One of the primary rRNA binding proteins, it binds specifically to the 5'-end of 16S ribosomal RNA. This is Small ribosomal subunit protein uS17 from Colwellia psychrerythraea (strain 34H / ATCC BAA-681) (Vibrio psychroerythus).